The primary structure comprises 180 residues: Nudix hydrolase 16, mitochondrial (180 aa).

A Nudix hydrolase domain is found at 18 to 162; it reads GSRLVAGCIP…WMKDALVEGF (145 aa). Phenylalanine 60 is a binding site for substrate. Residues glycine 63, glutamate 78, glutamate 82, and glutamate 144 each coordinate Mn(2+). A Nudix box motif is present at residues 63 to 84; sequence GGWENDETVREAAAREAVEEAG.

The protein belongs to the Nudix hydrolase family. The cofactor is Mg(2+). Mn(2+) serves as cofactor. As to expression, expressed in roots, leaves, stems and inflorescences.

Its subcellular location is the mitochondrion. In terms of biological role, probably mediates the hydrolysis of some nucleoside diphosphate derivatives. The chain is Nudix hydrolase 16, mitochondrial (NUDT16) from Arabidopsis thaliana (Mouse-ear cress).